The primary structure comprises 323 residues: Ribosomal RNA small subunit methyltransferase H (323 aa).

S-adenosyl-L-methionine contacts are provided by residues 44 to 46, Asp-64, Tyr-91, Asp-112, and Gln-119; that span reads AGH.

This sequence belongs to the methyltransferase superfamily. RsmH family.

Its subcellular location is the cytoplasm. It catalyses the reaction cytidine(1402) in 16S rRNA + S-adenosyl-L-methionine = N(4)-methylcytidine(1402) in 16S rRNA + S-adenosyl-L-homocysteine + H(+). In terms of biological role, specifically methylates the N4 position of cytidine in position 1402 (C1402) of 16S rRNA. This is Ribosomal RNA small subunit methyltransferase H from Nitratidesulfovibrio vulgaris (strain ATCC 29579 / DSM 644 / CCUG 34227 / NCIMB 8303 / VKM B-1760 / Hildenborough) (Desulfovibrio vulgaris).